Reading from the N-terminus, the 232-residue chain is MLTFLAIITVAYLIGSIPTSIIAGRMLKGIDIREFGSGNAGGTNAFRVLGWKAGLAVTLIDIAKGTIAAVPVVAFFKAHPLGAFPDMNEIALNLIAGMSAVIGHVFTVFAGFKGGKGVSTAAGMLIGIAPISMLMVIGVFILAITLTRYVSVGSILAAIAFPLIIAIRKYLFDLGTGLDYHFFGKWLVHDSLDYHLLIFGGIVAAAIIYTHRANIKRLFSGTENRLTFGRRS.

The next 6 membrane-spanning stretches (helical) occupy residues 4 to 24 (FLAI…IIAG), 56 to 76 (AVTL…VAFF), 90 to 110 (IALN…TVFA), 124 to 144 (MLIG…ILAI), 147 to 167 (TRYV…IIAI), and 191 to 211 (SLDY…IYTH).

It belongs to the PlsY family. In terms of assembly, probably interacts with PlsX.

Its subcellular location is the cell inner membrane. The enzyme catalyses an acyl phosphate + sn-glycerol 3-phosphate = a 1-acyl-sn-glycero-3-phosphate + phosphate. It participates in lipid metabolism; phospholipid metabolism. Catalyzes the transfer of an acyl group from acyl-phosphate (acyl-PO(4)) to glycerol-3-phosphate (G3P) to form lysophosphatidic acid (LPA). This enzyme utilizes acyl-phosphate as fatty acyl donor, but not acyl-CoA or acyl-ACP. The protein is Glycerol-3-phosphate acyltransferase of Chlorobaculum parvum (strain DSM 263 / NCIMB 8327) (Chlorobium vibrioforme subsp. thiosulfatophilum).